Reading from the N-terminus, the 581-residue chain is Probable peptidoglycan D,D-transpeptidase PenA (581 aa).

A helical transmembrane segment spans residues 28–48; sequence ISFVLMAMAVLFACLIARGLY. Ser-310 acts as the Acyl-ester intermediate in catalysis.

Belongs to the transpeptidase family. FtsI subfamily.

It is found in the cell inner membrane. It catalyses the reaction Preferential cleavage: (Ac)2-L-Lys-D-Ala-|-D-Ala. Also transpeptidation of peptidyl-alanyl moieties that are N-acyl substituents of D-alanine.. Its pathway is cell wall biogenesis; peptidoglycan biosynthesis. In terms of biological role, catalyzes cross-linking of the peptidoglycan cell wall at the division septum. The sequence is that of Probable peptidoglycan D,D-transpeptidase PenA from Neisseria gonorrhoeae.